The sequence spans 136 residues: Small ribosomal subunit protein uS9 (136 aa).

A disordered region spans residues 111-136; the sequence is TRDPRMKERKKTGQPGARKRFQFSKR. A compositionally biased stretch (basic residues) spans 117 to 136; it reads KERKKTGQPGARKRFQFSKR.

It belongs to the universal ribosomal protein uS9 family.

This is Small ribosomal subunit protein uS9 from Methylacidiphilum infernorum (isolate V4) (Methylokorus infernorum (strain V4)).